Here is a 137-residue protein sequence, read N- to C-terminus: Probable glycine cleavage system H protein 1 (137 aa).

A Lipoyl-binding domain is found at 31–113 (VAVIGITDYA…YGEGWIFKLK (83 aa)). K72 carries the post-translational modification N6-lipoyllysine.

The protein belongs to the GcvH family. The glycine cleavage system is composed of four proteins: P, T, L and H. Requires (R)-lipoate as cofactor.

Functionally, the glycine cleavage system catalyzes the degradation of glycine. The H protein shuttles the methylamine group of glycine from the P protein to the T protein. This Saccharolobus solfataricus (strain ATCC 35092 / DSM 1617 / JCM 11322 / P2) (Sulfolobus solfataricus) protein is Probable glycine cleavage system H protein 1.